We begin with the raw amino-acid sequence, 492 residues long: UDP-N-acetylmuramate--L-alanine ligase (492 aa).

Residue 126-132 (GTHGKTT) coordinates ATP.

It belongs to the MurCDEF family.

Its subcellular location is the cytoplasm. The catalysed reaction is UDP-N-acetyl-alpha-D-muramate + L-alanine + ATP = UDP-N-acetyl-alpha-D-muramoyl-L-alanine + ADP + phosphate + H(+). The protein operates within cell wall biogenesis; peptidoglycan biosynthesis. Functionally, cell wall formation. The chain is UDP-N-acetylmuramate--L-alanine ligase from Serratia proteamaculans (strain 568).